Consider the following 327-residue polypeptide: Tryptophan--tRNA ligase (327 aa).

ATP contacts are provided by residues 9–11 (QPS) and 17–18 (GN). The 'HIGH' region signature appears at 10-18 (PSGDIHIGN). An L-tryptophan-binding site is contributed by Asp132. ATP-binding positions include 144–146 (GED), Ile183, and 192–196 (KMSKS). A 'KMSKS' region motif is present at residues 192–196 (KMSKS).

The protein belongs to the class-I aminoacyl-tRNA synthetase family. Homodimer.

The protein resides in the cytoplasm. It catalyses the reaction tRNA(Trp) + L-tryptophan + ATP = L-tryptophyl-tRNA(Trp) + AMP + diphosphate + H(+). Functionally, catalyzes the attachment of tryptophan to tRNA(Trp). The polypeptide is Tryptophan--tRNA ligase (Caldanaerobacter subterraneus subsp. tengcongensis (strain DSM 15242 / JCM 11007 / NBRC 100824 / MB4) (Thermoanaerobacter tengcongensis)).